The chain runs to 146 residues: Prolactin-inducible protein homolog (146 aa).

The first 26 residues, 1-26 (MQGLSFTFSAVTLFLVLCLQLGIIES), serve as a signal peptide directing secretion. The residue at position 27 (Gln27) is a Pyrrolidone carboxylic acid. Cystine bridges form between Cys65-Cys91 and Cys89-Cys123.

It belongs to the PIP family. As to quaternary structure, monomer. Interacts with AZGP1. Lacrimal and submaxillary glands.

The protein resides in the secreted. This chain is Prolactin-inducible protein homolog (Pip), found in Mus musculus (Mouse).